Consider the following 166-residue polypeptide: Small ribosomal subunit protein uS5 (166 aa).

An S5 DRBM domain is found at 11-74 (LQEKLVQVNR…EAARKNMVDV (64 aa)).

It belongs to the universal ribosomal protein uS5 family. Part of the 30S ribosomal subunit. Contacts proteins S4 and S8.

Functionally, with S4 and S12 plays an important role in translational accuracy. In terms of biological role, located at the back of the 30S subunit body where it stabilizes the conformation of the head with respect to the body. This is Small ribosomal subunit protein uS5 from Marinobacter nauticus (strain ATCC 700491 / DSM 11845 / VT8) (Marinobacter aquaeolei).